The primary structure comprises 151 residues: UPF0735 ACT domain-containing protein SSP1116 (151 aa).

Positions 74–149 (TLILYVNDIV…HVSKVELISM (76 aa)) constitute an ACT domain.

Belongs to the UPF0735 family.

The polypeptide is UPF0735 ACT domain-containing protein SSP1116 (Staphylococcus saprophyticus subsp. saprophyticus (strain ATCC 15305 / DSM 20229 / NCIMB 8711 / NCTC 7292 / S-41)).